The sequence spans 438 residues: 3-phosphoshikimate 1-carboxyvinyltransferase (438 aa).

3 residues coordinate 3-phosphoshikimate: lysine 25, serine 26, and arginine 30. A phosphoenolpyruvate-binding site is contributed by lysine 25. The phosphoenolpyruvate site is built by glycine 99 and arginine 128. 3-phosphoshikimate is bound by residues serine 173, glutamine 175, aspartate 325, and lysine 352. Glutamine 175 serves as a coordination point for phosphoenolpyruvate. Aspartate 325 functions as the Proton acceptor in the catalytic mechanism. Arginine 356 and arginine 398 together coordinate phosphoenolpyruvate.

This sequence belongs to the EPSP synthase family. In terms of assembly, monomer.

It localises to the cytoplasm. The enzyme catalyses 3-phosphoshikimate + phosphoenolpyruvate = 5-O-(1-carboxyvinyl)-3-phosphoshikimate + phosphate. It functions in the pathway metabolic intermediate biosynthesis; chorismate biosynthesis; chorismate from D-erythrose 4-phosphate and phosphoenolpyruvate: step 6/7. Catalyzes the transfer of the enolpyruvyl moiety of phosphoenolpyruvate (PEP) to the 5-hydroxyl of shikimate-3-phosphate (S3P) to produce enolpyruvyl shikimate-3-phosphate and inorganic phosphate. The protein is 3-phosphoshikimate 1-carboxyvinyltransferase of Prochlorococcus marinus subsp. pastoris (strain CCMP1986 / NIES-2087 / MED4).